We begin with the raw amino-acid sequence, 444 residues long: UDP-N-acetylmuramate--L-alanine ligase (444 aa).

111–117 is a binding site for ATP; it reads GAHGKTS.

The protein belongs to the MurCDEF family.

The protein resides in the cytoplasm. The catalysed reaction is UDP-N-acetyl-alpha-D-muramate + L-alanine + ATP = UDP-N-acetyl-alpha-D-muramoyl-L-alanine + ADP + phosphate + H(+). It functions in the pathway cell wall biogenesis; peptidoglycan biosynthesis. Cell wall formation. The chain is UDP-N-acetylmuramate--L-alanine ligase from Leuconostoc citreum (strain KM20).